Consider the following 589-residue polypeptide: tRNA (guanine(26)-N(2))-dimethyltransferase 2 (589 aa).

The 457-residue stretch at 9 to 465 (TVIKEGEAEI…APMEVIWDIM (457 aa)) folds into the Trm1 methyltransferase domain. Position 36 (Arg36) interacts with S-adenosyl-L-methionine. A disordered region spans residues 51–122 (KQEHEAKSSK…RFAPREPKPP (72 aa)). 2 stretches are compositionally biased toward basic and acidic residues: residues 68 to 81 (VIEK…KEET) and 106 to 122 (DPAK…PKPP). The S-adenosyl-L-methionine site is built by Arg134, Asp152, and Val185. Zn(2+) is bound by residues Cys315, Cys318, Cys350, and Cys353. The tract at residues 550–589 (LSQHHEELKEEDEEAEPEDNVQDKVDPKRQKTATDNITST) is disordered. Acidic residues predominate over residues 558-569 (KEEDEEAEPEDN).

Belongs to the class I-like SAM-binding methyltransferase superfamily. Trm1 family.

It carries out the reaction guanosine(26) in tRNA + 2 S-adenosyl-L-methionine = N(2)-dimethylguanosine(26) in tRNA + 2 S-adenosyl-L-homocysteine + 2 H(+). Its function is as follows. Dimethylates a single guanine residue at position 26 of most tRNAs using S-adenosyl-L-methionine as donor of the methyl groups. The protein is tRNA (guanine(26)-N(2))-dimethyltransferase 2 of Arabidopsis thaliana (Mouse-ear cress).